The following is a 139-amino-acid chain: MKKSTLINSEVSRLIATLGHTDEITICDAGLPIPDHVQRIDLALAHGIPGFLDTVRVILSESQIEGVIIAEEFATVSPVHHDALITELAQESGLTGKPIAINYVSHEDFKVRTSQSRAVVRTGECTPYANVILQAGVVF.

Catalysis depends on histidine 20, which acts as the Proton donor. Substrate-binding positions include aspartate 28, histidine 106, and 128–130; that span reads YAN.

This sequence belongs to the RbsD / FucU family. RbsD subfamily. In terms of assembly, homodecamer.

It localises to the cytoplasm. The catalysed reaction is beta-D-ribopyranose = beta-D-ribofuranose. It participates in carbohydrate metabolism; D-ribose degradation; D-ribose 5-phosphate from beta-D-ribopyranose: step 1/2. Catalyzes the interconversion of beta-pyran and beta-furan forms of D-ribose. This chain is D-ribose pyranase, found in Vibrio campbellii (strain ATCC BAA-1116).